The sequence spans 547 residues: MSIYPMYTRKITHWFARRSFQNRIFLLILFTSTIVMLAMSWYLTDITEERLHYQVGQRALIQAMQISAMPELVEAVQKRDLARIKALIDPMRSFSDATYITVGDASGQRLYHVNPDEIGKSMEGGDSDEALINAKSYVSVRKGSLGSSLRGKSPIQDATGKVIGIVSVGYTIEQLENWLSLQISSLLIPMAIMLLLLLFCARRFSLHIKKQMLNMEPQQLSQLLIQQSVLFESVFEGLIAIDSDYKITAINQTARRLLNLSQPEPTLIGKRISSVISQEVFFYDAPQTNKKDEIVTFNQIKVIASRMAVILNNEPQGWVISFRSKDDINTLSLQLSQVQQYADNLRAVQHEHRNLISTIAGLLFLKRYNQALELIQQQSESHQKVIDFIARNFQDNHLAGLLIGKYYRAKELGLELIFDPACFVDRLPTALSHNEWISIVGNLLDNAYNASLRQPQGSKQIECLINSDGQEVIIEIADQGCGIDEALRDRIFERGVTSSASKDHGIGLWLVRSYVEQAGGSIVVENNIPFGTIFTLYIPLTRDEHHG.

Over 1–23 (MSIYPMYTRKITHWFARRSFQNR) the chain is Cytoplasmic. The helical transmembrane segment at 24 to 44 (IFLLILFTSTIVMLAMSWYLT) threads the bilayer. Residues 45–180 (DITEERLHYQ…TIEQLENWLS (136 aa)) are Periplasmic-facing. Positions 109, 112, 150, and 152 each coordinate citrate. The chain crosses the membrane as a helical span at residues 181–201 (LQISSLLIPMAIMLLLLLFCA). Residues 202-547 (RRFSLHIKKQ…IPLTRDEHHG (346 aa)) are Cytoplasmic-facing. The region spanning 225–264 (IQQSVLFESVFEGLIAIDSDYKITAINQTARRLLNLSQPE) is the PAS domain. A Histidine kinase domain is found at 347-542 (AVQHEHRNLI…IFTLYIPLTR (196 aa)). His-350 is modified (phosphohistidine; by autocatalysis).

In terms of assembly, homodimer. In vitro CitB and the CitA kinase domain form a complex, formation of which is enhanced by ATP. In terms of processing, autophosphorylated.

The protein resides in the cell inner membrane. The catalysed reaction is ATP + protein L-histidine = ADP + protein N-phospho-L-histidine.. Member of the two-component regulatory system CitA/CitB. Probably activates CitB by phosphorylation. The periplasmic domain binds H-citrate(2-), which is essential for induction of the citrate-fermentation genes. This is Sensor histidine kinase CitA (citA) from Klebsiella pneumoniae.